Consider the following 320-residue polypeptide: AA9 family lytic polysaccharide monooxygenase-like protein CEL1 (320 aa).

The signal sequence occupies residues 1-29 (MRLPSRQQVLKMLATFSLALGLFAAKVQA). 2 disulfides stabilise this stretch: C78-C199 and C121-C126. Residue H109 participates in Cu(2+) binding. An N-linked (GlcNAc...) asparagine glycan is attached at N163. O2-binding residues include H189 and Q194. Y196 provides a ligand contact to Cu(2+). Residues 255–284 (GSGGNGGSPTTTPHTTTPITTSPPPTSTPG) form a disordered region. A compositionally biased stretch (low complexity) spans 262 to 274 (SPTTTPHTTTPIT). Residues 284–320 (GTIPQYGQCGGIGWTGGTGCVAPYQCKVINDYYSQCL) enclose the CBM1 domain.

This sequence belongs to the polysaccharide monooxygenase AA9 family. The cofactor is Cu(2+).

It is found in the secreted. It catalyses the reaction [(1-&gt;4)-beta-D-glucosyl]n+m + reduced acceptor + O2 = 4-dehydro-beta-D-glucosyl-[(1-&gt;4)-beta-D-glucosyl]n-1 + [(1-&gt;4)-beta-D-glucosyl]m + acceptor + H2O.. Its function is as follows. Lytic polysaccharide monooxygenase (LPMO)-like protein that binds strongly to cellulose. Seems not to acts as an endoglucanase, a ceUobiohydrolase able to hydrolyze fluorogenic cellobiosides, a /3-glucosidase, a xylanase, nor a cellobiose:quinone oxidoreductase. In Agaricus bisporus (White button mushroom), this protein is AA9 family lytic polysaccharide monooxygenase-like protein CEL1.